A 341-amino-acid chain; its full sequence is Glucokinase (341 aa).

Residue 18 to 23 (GDIGGT) participates in ATP binding.

This sequence belongs to the bacterial glucokinase family.

It is found in the cytoplasm. The enzyme catalyses D-glucose + ATP = D-glucose 6-phosphate + ADP + H(+). In Rhizobium leguminosarum bv. trifolii (strain WSM2304), this protein is Glucokinase.